A 425-amino-acid polypeptide reads, in one-letter code: UDP-N-acetylglucosamine 1-carboxyvinyltransferase (425 aa).

22-23 (KN) is a binding site for phosphoenolpyruvate. Arg-98 lines the UDP-N-acetyl-alpha-D-glucosamine pocket. The Proton donor role is filled by Cys-122. Cys-122 is subject to 2-(S-cysteinyl)pyruvic acid O-phosphothioketal. Residues 127–131 (RPVDQ), Asp-313, and Ile-335 each bind UDP-N-acetyl-alpha-D-glucosamine.

The protein belongs to the EPSP synthase family. MurA subfamily.

It is found in the cytoplasm. It carries out the reaction phosphoenolpyruvate + UDP-N-acetyl-alpha-D-glucosamine = UDP-N-acetyl-3-O-(1-carboxyvinyl)-alpha-D-glucosamine + phosphate. It functions in the pathway cell wall biogenesis; peptidoglycan biosynthesis. In terms of biological role, cell wall formation. Adds enolpyruvyl to UDP-N-acetylglucosamine. This is UDP-N-acetylglucosamine 1-carboxyvinyltransferase from Xylella fastidiosa (strain M23).